Here is a 166-residue protein sequence, read N- to C-terminus: Small ribosomal subunit protein uS5 (166 aa).

Positions tyrosine 12–valine 75 constitute an S5 DRBM domain.

This sequence belongs to the universal ribosomal protein uS5 family. As to quaternary structure, part of the 30S ribosomal subunit. Contacts proteins S4 and S8.

In terms of biological role, with S4 and S12 plays an important role in translational accuracy. Its function is as follows. Located at the back of the 30S subunit body where it stabilizes the conformation of the head with respect to the body. The protein is Small ribosomal subunit protein uS5 of Pseudomonas fluorescens (strain SBW25).